The following is a 530-amino-acid chain: uncharacterized protein (530 aa).

It belongs to the protein kinase superfamily. ADCK protein kinase family.

This is an uncharacterized protein from Clostridium pasteurianum.